A 357-amino-acid chain; its full sequence is GTPase Obg (357 aa).

Residues 1-159 form the Obg domain; sequence MKFVDEAEIQ…RTLKLELKLL (159 aa). Residues 160–343 enclose the OBG-type G domain; that stretch reads ADIGMLGFPN…IMKSAMTLFE (184 aa). GTP contacts are provided by residues 166 to 173, 191 to 195, 213 to 216, 293 to 296, and 324 to 326; these read GFPNVGKS, FTTLY, DVPG, NKAD, and SAV. Residues Ser173 and Thr193 each contribute to the Mg(2+) site.

Belongs to the TRAFAC class OBG-HflX-like GTPase superfamily. OBG GTPase family. In terms of assembly, monomer. Requires Mg(2+) as cofactor.

Its subcellular location is the cytoplasm. In terms of biological role, an essential GTPase which binds GTP, GDP and possibly (p)ppGpp with moderate affinity, with high nucleotide exchange rates and a fairly low GTP hydrolysis rate. Plays a role in control of the cell cycle, stress response, ribosome biogenesis and in those bacteria that undergo differentiation, in morphogenesis control. In Xylella fastidiosa (strain M12), this protein is GTPase Obg.